Reading from the N-terminus, the 713-residue chain is Polyribonucleotide nucleotidyltransferase (713 aa).

Residues D495 and D501 each coordinate Mg(2+). The KH domain maps to 562–621; the sequence is PRLLTLKIPVDMIGLVIGPGGKTIKRIVEETGAKVDIEDDGTVVVSSIDGAKALAAKQII. The S1 motif domain occupies 631-700; that stretch reads DKVYLGTVTR…QKGRINLTRR (70 aa).

The protein belongs to the polyribonucleotide nucleotidyltransferase family. Requires Mg(2+) as cofactor.

The protein resides in the cytoplasm. It carries out the reaction RNA(n+1) + phosphate = RNA(n) + a ribonucleoside 5'-diphosphate. Involved in mRNA degradation. Catalyzes the phosphorolysis of single-stranded polyribonucleotides processively in the 3'- to 5'-direction. The chain is Polyribonucleotide nucleotidyltransferase from Gloeobacter violaceus (strain ATCC 29082 / PCC 7421).